The following is a 264-amino-acid chain: Thymidylate synthase (264 aa).

Arg-21 lines the dUMP pocket. Residue His-51 coordinates (6R)-5,10-methylene-5,6,7,8-tetrahydrofolate. 126–127 (RR) is a dUMP binding site. The active-site Nucleophile is Cys-146. DUMP contacts are provided by residues 166-169 (RSAD), Asn-177, and 207-209 (HLY). Residue Asp-169 coordinates (6R)-5,10-methylene-5,6,7,8-tetrahydrofolate. A (6R)-5,10-methylene-5,6,7,8-tetrahydrofolate-binding site is contributed by Ala-263.

This sequence belongs to the thymidylate synthase family. Bacterial-type ThyA subfamily. In terms of assembly, homodimer.

The protein resides in the cytoplasm. The enzyme catalyses dUMP + (6R)-5,10-methylene-5,6,7,8-tetrahydrofolate = 7,8-dihydrofolate + dTMP. It participates in pyrimidine metabolism; dTTP biosynthesis. In terms of biological role, catalyzes the reductive methylation of 2'-deoxyuridine-5'-monophosphate (dUMP) to 2'-deoxythymidine-5'-monophosphate (dTMP) while utilizing 5,10-methylenetetrahydrofolate (mTHF) as the methyl donor and reductant in the reaction, yielding dihydrofolate (DHF) as a by-product. This enzymatic reaction provides an intracellular de novo source of dTMP, an essential precursor for DNA biosynthesis. In Chelativorans sp. (strain BNC1), this protein is Thymidylate synthase.